The chain runs to 208 residues: FMN-dependent NADH:quinone oxidoreductase (208 aa).

Residues S10, 16–18 (SRS), and 96–99 (MYNF) contribute to the FMN site.

It belongs to the azoreductase type 1 family. In terms of assembly, homodimer. FMN serves as cofactor.

The enzyme catalyses 2 a quinone + NADH + H(+) = 2 a 1,4-benzosemiquinone + NAD(+). It catalyses the reaction N,N-dimethyl-1,4-phenylenediamine + anthranilate + 2 NAD(+) = 2-(4-dimethylaminophenyl)diazenylbenzoate + 2 NADH + 2 H(+). Its function is as follows. Quinone reductase that provides resistance to thiol-specific stress caused by electrophilic quinones. Also exhibits azoreductase activity. Catalyzes the reductive cleavage of the azo bond in aromatic azo compounds to the corresponding amines. The protein is FMN-dependent NADH:quinone oxidoreductase of Xanthobacter autotrophicus (strain ATCC BAA-1158 / Py2).